Here is a 227-residue protein sequence, read N- to C-terminus: Enolase-phosphatase E1 (227 aa).

It belongs to the HAD-like hydrolase superfamily. MasA/MtnC family. As to quaternary structure, monomer. Mg(2+) is required as a cofactor.

The catalysed reaction is 5-methylsulfanyl-2,3-dioxopentyl phosphate + H2O = 1,2-dihydroxy-5-(methylsulfanyl)pent-1-en-3-one + phosphate. Its pathway is amino-acid biosynthesis; L-methionine biosynthesis via salvage pathway; L-methionine from S-methyl-5-thio-alpha-D-ribose 1-phosphate: step 3/6. The protein operates within amino-acid biosynthesis; L-methionine biosynthesis via salvage pathway; L-methionine from S-methyl-5-thio-alpha-D-ribose 1-phosphate: step 4/6. In terms of biological role, bifunctional enzyme that catalyzes the enolization of 2,3-diketo-5-methylthiopentyl-1-phosphate (DK-MTP-1-P) into the intermediate 2-hydroxy-3-keto-5-methylthiopentenyl-1-phosphate (HK-MTPenyl-1-P), which is then dephosphorylated to form the acireductone 1,2-dihydroxy-3-keto-5-methylthiopentene (DHK-MTPene). This Pseudomonas syringae pv. syringae (strain B728a) protein is Enolase-phosphatase E1.